The sequence spans 109 residues: MSKRPAFPGMGGMNMQQMMKQAKKLQEQMAKEQENITTQEFTGKAADDMVVATFTGDRTLKSLFIKPEAIDPDDPDMLEDLVIDAVNKGLKQIDQATQQSLGKYTKGLM.

Belongs to the YbaB/EbfC family. In terms of assembly, homodimer.

The protein resides in the cytoplasm. It is found in the nucleoid. Its function is as follows. Binds to DNA and alters its conformation. May be involved in regulation of gene expression, nucleoid organization and DNA protection. The protein is Nucleoid-associated protein LBUL_1514 of Lactobacillus delbrueckii subsp. bulgaricus (strain ATCC BAA-365 / Lb-18).